Here is a 215-residue protein sequence, read N- to C-terminus: Probable phosphoglycerate mutase GpmB (215 aa).

Residues R8–N15, Q21–G22, R58, E82–M85, and G151–M152 contribute to the substrate site. Catalysis depends on H9, which acts as the Tele-phosphohistidine intermediate. The active-site Proton donor/acceptor is E82.

The protein belongs to the phosphoglycerate mutase family. GpmB subfamily.

The catalysed reaction is (2R)-2-phosphoglycerate = (2R)-3-phosphoglycerate. It participates in carbohydrate degradation; glycolysis; pyruvate from D-glyceraldehyde 3-phosphate: step 3/5. The chain is Probable phosphoglycerate mutase GpmB from Yersinia pseudotuberculosis serotype O:1b (strain IP 31758).